Consider the following 90-residue polypeptide: Acylphosphatase (90 aa).

The 86-residue stretch at 5-90 (SYLFNVKGKV…WQELTDFKMY (86 aa)) folds into the Acylphosphatase-like domain. Catalysis depends on residues R20 and N38.

Belongs to the acylphosphatase family.

It carries out the reaction an acyl phosphate + H2O = a carboxylate + phosphate + H(+). This Aliivibrio fischeri (strain ATCC 700601 / ES114) (Vibrio fischeri) protein is Acylphosphatase (acyP).